The chain runs to 253 residues: Tryptophan synthase alpha chain (253 aa).

Catalysis depends on proton acceptor residues Glu-47 and Asp-58.

Belongs to the TrpA family. In terms of assembly, tetramer of two alpha and two beta chains.

It carries out the reaction (1S,2R)-1-C-(indol-3-yl)glycerol 3-phosphate + L-serine = D-glyceraldehyde 3-phosphate + L-tryptophan + H2O. Its pathway is amino-acid biosynthesis; L-tryptophan biosynthesis; L-tryptophan from chorismate: step 5/5. In terms of biological role, the alpha subunit is responsible for the aldol cleavage of indoleglycerol phosphate to indole and glyceraldehyde 3-phosphate. The sequence is that of Tryptophan synthase alpha chain from Lactococcus lactis subsp. cremoris (strain MG1363).